The sequence spans 321 residues: GDP-L-fucose synthase (321 aa).

Residue 14–20 (GGSGLVG) participates in NADP(+) binding. Y143 (proton donor/acceptor) is an active-site residue. NADP(+)-binding positions include K147, 170–173 (PTNV), and H186. Residues K194, W208, R215, and D277 each contribute to the substrate site.

Belongs to the NAD(P)-dependent epimerase/dehydratase family. Fucose synthase subfamily. In terms of assembly, homodimer.

The enzyme catalyses GDP-beta-L-fucose + NADP(+) = GDP-4-dehydro-alpha-D-rhamnose + NADPH + H(+). It functions in the pathway nucleotide-sugar biosynthesis; GDP-L-fucose biosynthesis via de novo pathway; GDP-L-fucose from GDP-alpha-D-mannose: step 2/2. In terms of biological role, catalyzes the two-step NADP-dependent conversion of GDP-4-dehydro-6-deoxy-D-mannose to GDP-fucose, involving an epimerase and a reductase reaction. This is GDP-L-fucose synthase (GFUS) from Pongo abelii (Sumatran orangutan).